Here is a 469-residue protein sequence, read N- to C-terminus: Aspartyl/glutamyl-tRNA(Asn/Gln) amidotransferase subunit B (469 aa).

The protein belongs to the GatB/GatE family. GatB subfamily. As to quaternary structure, heterotrimer of A, B and C subunits.

The enzyme catalyses L-glutamyl-tRNA(Gln) + L-glutamine + ATP + H2O = L-glutaminyl-tRNA(Gln) + L-glutamate + ADP + phosphate + H(+). It carries out the reaction L-aspartyl-tRNA(Asn) + L-glutamine + ATP + H2O = L-asparaginyl-tRNA(Asn) + L-glutamate + ADP + phosphate + 2 H(+). Functionally, allows the formation of correctly charged Asn-tRNA(Asn) or Gln-tRNA(Gln) through the transamidation of misacylated Asp-tRNA(Asn) or Glu-tRNA(Gln) in organisms which lack either or both of asparaginyl-tRNA or glutaminyl-tRNA synthetases. The reaction takes place in the presence of glutamine and ATP through an activated phospho-Asp-tRNA(Asn) or phospho-Glu-tRNA(Gln). The polypeptide is Aspartyl/glutamyl-tRNA(Asn/Gln) amidotransferase subunit B (Methanococcus maripaludis (strain C6 / ATCC BAA-1332)).